Reading from the N-terminus, the 515-residue chain is MDGKLIAKLLLIAAVIGFCIHLATPLNEKIALGLDLQGGMHLALDVDTEQAVERKLDAMTNALRLEAQQQHLVIGTIQRRGMQILIPVPYAEEKAEFKRLMQRRYGQLELQDEQPELLVYGYTTYDIEEIKELAVGQALETIRNRIDQFGVSEPTVQKQGDRRIIIELPGVEDVDRAVELIGRTAMLEFRLVNENVSTRDALDGFLPENSEVLYQRHMDPQTNTEVDRTPFVLYRDVIFTGDRLLDARVRFDPQFNTPYVSITLDGEGARLFADVTGRNVGRRLAIVLDGHVHSAPVINERIPSGQASISGQFTMEQATDLSIVLRSGSLPAPVDIVENRTVGPTLGQDSIDKGILSVTIGMALVLLFMVAYYRLSGLLANMALLMNLIILMGLLAYFGATLTLPGIAGIILTIGIAVDANVLIFERIREELRRGASPRLAIEEGYAKAFSTILDANITTLIVAVILFQFGTGPIKGFAVTLSIGILASMFTAILCTRAIYELILVYKPIRKLSI.

Helical transmembrane passes span 5–25 (LIAK…LATP), 353–373 (KGIL…VAYY), 375–395 (LSGL…MGLL), 398–418 (FGAT…GIAV), 450–470 (FSTI…LFQF), and 477–497 (GFAV…ILCT).

Belongs to the SecD/SecF family. SecD subfamily. Forms a complex with SecF. Part of the essential Sec protein translocation apparatus which comprises SecA, SecYEG and auxiliary proteins SecDF. Other proteins may also be involved.

It is found in the cell inner membrane. Its function is as follows. Part of the Sec protein translocase complex. Interacts with the SecYEG preprotein conducting channel. SecDF uses the proton motive force (PMF) to complete protein translocation after the ATP-dependent function of SecA. The chain is Protein translocase subunit SecD from Desulfurispirillum indicum (strain ATCC BAA-1389 / DSM 22839 / S5).